Consider the following 728-residue polypeptide: Catalase-peroxidase 1 (728 aa).

A cross-link (tryptophyl-tyrosyl-methioninium (Trp-Tyr) (with M-244)) is located at residues 91-218 (WHSAGTYRTA…LAAVQMGLIY (128 aa)). H92 serves as the catalytic Proton acceptor. A cross-link (tryptophyl-tyrosyl-methioninium (Tyr-Met) (with W-91)) is located at residues 218-244 (YVNPEGPDGNPDPVAAAHDIRETFARM). H259 lines the heme b pocket.

This sequence belongs to the peroxidase family. Peroxidase/catalase subfamily. As to quaternary structure, homodimer or homotetramer. It depends on heme b as a cofactor. Formation of the three residue Trp-Tyr-Met cross-link is important for the catalase, but not the peroxidase activity of the enzyme.

It carries out the reaction H2O2 + AH2 = A + 2 H2O. It catalyses the reaction 2 H2O2 = O2 + 2 H2O. Bifunctional enzyme with both catalase and broad-spectrum peroxidase activity. This is Catalase-peroxidase 1 from Burkholderia cenocepacia (strain ATCC BAA-245 / DSM 16553 / LMG 16656 / NCTC 13227 / J2315 / CF5610) (Burkholderia cepacia (strain J2315)).